A 295-amino-acid polypeptide reads, in one-letter code: Cytidine deaminase (295 aa).

CMP/dCMP-type deaminase domains lie at 48-168 (EDSD…FGPA) and 187-295 (DDDE…YLSL). Residue 89–91 (NME) participates in substrate binding. Residue His-102 participates in Zn(2+) binding. The active-site Proton donor is the Glu-104. The Zn(2+) site is built by Cys-129 and Cys-132.

This sequence belongs to the cytidine and deoxycytidylate deaminase family. Homodimer. Requires Zn(2+) as cofactor.

It catalyses the reaction cytidine + H2O + H(+) = uridine + NH4(+). It carries out the reaction 2'-deoxycytidine + H2O + H(+) = 2'-deoxyuridine + NH4(+). This enzyme scavenges exogenous and endogenous cytidine and 2'-deoxycytidine for UMP synthesis. This Vibrio cholerae serotype O1 (strain ATCC 39541 / Classical Ogawa 395 / O395) protein is Cytidine deaminase.